Consider the following 333-residue polypeptide: DNA-directed RNA polymerase subunit alpha (333 aa).

The segment at 1 to 234 is alpha N-terminal domain (alpha-NTD); the sequence is MQISVNEFLT…QQLAAFVDLK (234 aa). The tract at residues 248–333 is alpha C-terminal domain (alpha-CTD); it reads IDPILLRPVD…SLKKDDKATA (86 aa).

It belongs to the RNA polymerase alpha chain family. As to quaternary structure, homodimer. The RNAP catalytic core consists of 2 alpha, 1 beta, 1 beta' and 1 omega subunit. When a sigma factor is associated with the core the holoenzyme is formed, which can initiate transcription.

It catalyses the reaction RNA(n) + a ribonucleoside 5'-triphosphate = RNA(n+1) + diphosphate. In terms of biological role, DNA-dependent RNA polymerase catalyzes the transcription of DNA into RNA using the four ribonucleoside triphosphates as substrates. This Pseudomonas fluorescens (strain Pf0-1) protein is DNA-directed RNA polymerase subunit alpha.